A 262-amino-acid polypeptide reads, in one-letter code: Ribosomal RNA small subunit methyltransferase A (262 aa).

Positions 16, 18, 43, 64, 89, and 109 each coordinate S-adenosyl-L-methionine.

The protein belongs to the class I-like SAM-binding methyltransferase superfamily. rRNA adenine N(6)-methyltransferase family. RsmA subfamily.

Its subcellular location is the cytoplasm. It catalyses the reaction adenosine(1518)/adenosine(1519) in 16S rRNA + 4 S-adenosyl-L-methionine = N(6)-dimethyladenosine(1518)/N(6)-dimethyladenosine(1519) in 16S rRNA + 4 S-adenosyl-L-homocysteine + 4 H(+). Functionally, specifically dimethylates two adjacent adenosines (A1518 and A1519) in the loop of a conserved hairpin near the 3'-end of 16S rRNA in the 30S particle. May play a critical role in biogenesis of 30S subunits. The sequence is that of Ribosomal RNA small subunit methyltransferase A from Xanthomonas campestris pv. campestris (strain B100).